Consider the following 107-residue polypeptide: Ig kappa chain V-VI region NQ2-48.2.2 (107 aa).

The interval 1-23 (QILLTQSPAIMSASPGQKVTMTC) is framework-1. Residues cysteine 23 and cysteine 87 are joined by a disulfide bond. A complementarity-determining-1 region spans residues 24 to 33 (SASSSVSYMH). Residues 34 to 48 (WYQQKSGTSPKRWIY) form a framework-2 region. Residues 49 to 55 (DTSKLAS) form a complementarity-determining-2 region. Positions 56–87 (GVPARFSGSGSATSYSLTITSMQAEDAATYYC) are framework-3. The interval 88–96 (QQWSSNPLT) is complementarity-determining-3. The tract at residues 97 to 106 (FGAGTKLXLK) is framework-4.

In terms of biological role, anti-2-phenyl oxazolone (PHOX) Antibody. The sequence is that of Ig kappa chain V-VI region NQ2-48.2.2 from Mus musculus (Mouse).